Reading from the N-terminus, the 401-residue chain is Exodeoxyribonuclease 7 large subunit (401 aa).

Belongs to the XseA family. Heterooligomer composed of large and small subunits.

The protein resides in the cytoplasm. The enzyme catalyses Exonucleolytic cleavage in either 5'- to 3'- or 3'- to 5'-direction to yield nucleoside 5'-phosphates.. Bidirectionally degrades single-stranded DNA into large acid-insoluble oligonucleotides, which are then degraded further into small acid-soluble oligonucleotides. This chain is Exodeoxyribonuclease 7 large subunit, found in Thermoanaerobacter sp. (strain X514).